Consider the following 754-residue polypeptide: Glutathione biosynthesis bifunctional protein GshAB (754 aa).

The glutamate--cysteine ligase stretch occupies residues 1-333; it reads MHINQLLQHA…KAQKLNDKIA (333 aa). The region spanning 489–752 is the ATP-grasp domain; sequence KKILRENGYP…LAKLFPEIST (264 aa). 516 to 574 contacts ATP; that stretch reads SQIKNKPIVVKPKTTNFGLGISIFETAASHNDYEKALDIAFIEDYSVLVEEFIPGTEYR. Mg(2+) contacts are provided by Asp-696, Glu-717, and Asn-719. The Mn(2+) site is built by Asp-696, Glu-717, and Asn-719.

In the N-terminal section; belongs to the glutamate--cysteine ligase type 1 family. Type 2 subfamily. As to quaternary structure, monomer. Mg(2+) serves as cofactor. Mn(2+) is required as a cofactor.

It catalyses the reaction L-cysteine + L-glutamate + ATP = gamma-L-glutamyl-L-cysteine + ADP + phosphate + H(+). The catalysed reaction is gamma-L-glutamyl-L-cysteine + glycine + ATP = glutathione + ADP + phosphate + H(+). It participates in sulfur metabolism; glutathione biosynthesis; glutathione from L-cysteine and L-glutamate: step 1/2. Its pathway is sulfur metabolism; glutathione biosynthesis; glutathione from L-cysteine and L-glutamate: step 2/2. Functionally, synthesizes glutathione from L-glutamate and L-cysteine via gamma-L-glutamyl-L-cysteine. The polypeptide is Glutathione biosynthesis bifunctional protein GshAB (Streptococcus mutans serotype c (strain ATCC 700610 / UA159)).